The following is a 306-amino-acid chain: Eukaryotic translation initiation factor 2 subunit alpha (306 aa).

Residues 17 to 88 (DELVVVNVRQ…EKGYIDLSKR (72 aa)) form the S1 motif domain. Ser52 is subject to Phosphoserine. At Thr179 the chain carries Phosphothreonine. A phosphoserine mark is found at Ser273, Ser295, Ser303, and Ser305.

The protein belongs to the eIF-2-alpha family. In terms of assembly, eukaryotic translation initiation factor 2 eIF2 is a heterotrimeric complex composed of an alpha, a beta and a gamma subunit.

The protein resides in the cytoplasm. The protein localises to the cytosol. Functionally, eIF-2 functions in the early steps of protein synthesis by forming a ternary complex with GTP and initiator tRNA. This complex binds to a 40S ribosomal subunit, followed by mRNA binding to form a 43S pre-initiation complex. Junction of the 60S ribosomal subunit to form the 80S initiation complex is preceded by hydrolysis of the GTP bound to eIF-2 and release of an eIF-2-GDP binary complex. In order for eIF-2 to recycle and catalyze another round of initiation, the GDP bound to eIF-2 must exchange with GTP by way of a reaction catalyzed by eIF2B. The chain is Eukaryotic translation initiation factor 2 subunit alpha (tif211) from Schizosaccharomyces pombe (strain 972 / ATCC 24843) (Fission yeast).